A 331-amino-acid chain; its full sequence is Transmembrane protein 59-like (331 aa).

Residues 1–21 form the signal peptide; sequence MAAVALPLLLLLASPATPTPA. Residues 15–62 are disordered; it reads PATPTPARDPFSPQLGDTQRCQQRCRQRHPGLPPAQPEPEGPSESPNN. Residues 45–54 are compositionally biased toward pro residues; that stretch reads GLPPAQPEPE. Residue Asn-90 is glycosylated (N-linked (GlcNAc...) asparagine). Residues 258–278 traverse the membrane as a helical segment; it reads VLFCCLFLSVLIILWLSCCTL. The Microbody targeting signal signature appears at 329–331; that stretch reads TTL.

The protein belongs to the TMEM59 family.

The protein localises to the golgi apparatus membrane. Functionally, modulates the O-glycosylation and complex N-glycosylation steps occurring during the Golgi maturation of APP. Inhibits APP transport to the cell surface and further shedding. The sequence is that of Transmembrane protein 59-like (Tmem59l) from Rattus norvegicus (Rat).